A 193-amino-acid chain; its full sequence is Rho-related GTP-binding protein RhoA-B (193 aa).

Residues Gly-12–Thr-19, Phe-30–Thr-37, Asp-59–Gln-63, Asn-117–Asp-120, and Ser-160–Lys-162 each bind GTP. The (Microbial infection) O-linked (GlcNAc) tyrosine; by Yersinia Afp18 glycan is linked to Tyr-34. At Cys-190 the chain carries Cysteine methyl ester. A lipid anchor (S-geranylgeranyl cysteine) is attached at Cys-190. Residues Cys-191–Leu-193 constitute a propeptide, removed in mature form.

Belongs to the small GTPase superfamily. Rho family. (Microbial infection) Glycosylated at Tyr-34 by Yersinia ruckeri toxin Afp18. Mono-O-GlcNAcylation by Afp18 inhibits RhoA activation by guanine nucleotide exchange factors and blocks RhoA signaling.

Its subcellular location is the cell membrane. Regulates a signal transduction pathway linking plasma membrane receptors to the assembly of focal adhesions and actin stress fibers. The sequence is that of Rho-related GTP-binding protein RhoA-B from Danio rerio (Zebrafish).